Reading from the N-terminus, the 274-residue chain is 2,3,4,5-tetrahydropyridine-2,6-dicarboxylate N-succinyltransferase (274 aa).

The protein belongs to the transferase hexapeptide repeat family.

Its subcellular location is the cytoplasm. It carries out the reaction (S)-2,3,4,5-tetrahydrodipicolinate + succinyl-CoA + H2O = (S)-2-succinylamino-6-oxoheptanedioate + CoA. The protein operates within amino-acid biosynthesis; L-lysine biosynthesis via DAP pathway; LL-2,6-diaminopimelate from (S)-tetrahydrodipicolinate (succinylase route): step 1/3. This chain is 2,3,4,5-tetrahydropyridine-2,6-dicarboxylate N-succinyltransferase, found in Shigella boydii serotype 18 (strain CDC 3083-94 / BS512).